The following is a 280-amino-acid chain: uncharacterized protein (280 aa).

This is an uncharacterized protein from Aedes vexans (Inland floodwater mosquito).